A 367-amino-acid polypeptide reads, in one-letter code: 2-aminoethylphosphonate--pyruvate transaminase (367 aa).

Lys-193 is modified (N6-(pyridoxal phosphate)lysine).

The protein belongs to the class-V pyridoxal-phosphate-dependent aminotransferase family. PhnW subfamily. As to quaternary structure, homodimer. Pyridoxal 5'-phosphate is required as a cofactor.

It carries out the reaction (2-aminoethyl)phosphonate + pyruvate = phosphonoacetaldehyde + L-alanine. Functionally, involved in phosphonate degradation. The sequence is that of 2-aminoethylphosphonate--pyruvate transaminase from Vibrio vulnificus (strain CMCP6).